The primary structure comprises 218 residues: Peptide deformylase 1 (218 aa).

Fe cation is bound by residues C126 and H168. E169 is an active-site residue. H172 is a binding site for Fe cation.

It belongs to the polypeptide deformylase family. Fe(2+) is required as a cofactor.

The catalysed reaction is N-terminal N-formyl-L-methionyl-[peptide] + H2O = N-terminal L-methionyl-[peptide] + formate. Functionally, removes the formyl group from the N-terminal Met of newly synthesized proteins. Requires at least a dipeptide for an efficient rate of reaction. N-terminal L-methionine is a prerequisite for activity but the enzyme has broad specificity at other positions. In Streptomyces coelicolor (strain ATCC BAA-471 / A3(2) / M145), this protein is Peptide deformylase 1.